Here is a 325-residue protein sequence, read N- to C-terminus: NADH-quinone oxidoreductase subunit H (325 aa).

Helical transmembrane passes span 11 to 31, 50 to 69, 81 to 101, 114 to 134, 154 to 174, 186 to 206, 237 to 257, 265 to 285, and 304 to 324; these read ILLSILKAVVILLVVVTCGAF, NRVGWGGSLQLVADMIKMFF, VIFTLAPMIAFTSLLLSFAIV, IGILFFLMMAGLAVYAVLFAG, VSYEVFLGLSLMGVVAQAGSF, LWNVIPQFFGFVTFAIAGVAV, FFVGEYIGIVTVSALMVTLFF, LPPFVWFALKTAFFMMMFILI, and VCLPLTLINLLVTAAVILWQA.

This sequence belongs to the complex I subunit 1 family. NDH-1 is composed of 13 different subunits. Subunits NuoA, H, J, K, L, M, N constitute the membrane sector of the complex.

It is found in the cell inner membrane. The enzyme catalyses a quinone + NADH + 5 H(+)(in) = a quinol + NAD(+) + 4 H(+)(out). NDH-1 shuttles electrons from NADH, via FMN and iron-sulfur (Fe-S) centers, to quinones in the respiratory chain. The immediate electron acceptor for the enzyme in this species is believed to be ubiquinone. Couples the redox reaction to proton translocation (for every two electrons transferred, four hydrogen ions are translocated across the cytoplasmic membrane), and thus conserves the redox energy in a proton gradient. This subunit may bind ubiquinone. The protein is NADH-quinone oxidoreductase subunit H of Salmonella arizonae (strain ATCC BAA-731 / CDC346-86 / RSK2980).